The chain runs to 117 residues: Large ribosomal subunit protein bL20 (117 aa).

This sequence belongs to the bacterial ribosomal protein bL20 family.

Binds directly to 23S ribosomal RNA and is necessary for the in vitro assembly process of the 50S ribosomal subunit. It is not involved in the protein synthesizing functions of that subunit. The protein is Large ribosomal subunit protein bL20 of Geobacter metallireducens (strain ATCC 53774 / DSM 7210 / GS-15).